A 564-amino-acid chain; its full sequence is Cysteine--tRNA ligase CPS1, chloroplastic/mitochondrial (564 aa).

A chloroplast and mitochondrion-targeting transit peptide spans 1 to 43; the sequence is MAAAVVVRRAAGLIPLLSSRFGARMPLHRALSQIPPPRFCRLL. Residue Cys93 participates in Zn(2+) binding. Positions 95 to 105 match the 'HIGH' region motif; it reads VTPYDDSHIGH. Cys273, His298, and Glu302 together coordinate Zn(2+). A 'KMSKS' region motif is present at residues 330-334; the sequence is KMSKS. Lys333 serves as a coordination point for ATP.

Belongs to the class-I aminoacyl-tRNA synthetase family. Zn(2+) serves as cofactor.

It is found in the plastid. The protein resides in the chloroplast. The protein localises to the mitochondrion. The catalysed reaction is tRNA(Cys) + L-cysteine + ATP = L-cysteinyl-tRNA(Cys) + AMP + diphosphate. Its function is as follows. Nuclear genome-encoded factor required for normal assembly of chloroplast polysomes. The protein is Cysteine--tRNA ligase CPS1, chloroplastic/mitochondrial of Zea mays (Maize).